Here is a 600-residue protein sequence, read N- to C-terminus: Forkhead box protein O (600 aa).

T49 is subject to Phosphothreonine; by PKB/AKT1. Phosphoserine is present on S80. The fork-head DNA-binding region spans 100 to 206 (WGNLSYADLI…ETSRYEKRRG (107 aa)). Disordered stretches follow at residues 187-210 (KSVR…RAKK), 222-283 (GLND…LEPD), 319-364 (QQGF…TPGY), and 580-600 (LNAR…SWVH). S195 carries the post-translational modification Phosphoserine; by PKB/AKT1. Composition is skewed to polar residues over residues 226-235 (ATPSPSSSVS) and 261-270 (RASSNASSCG). S264 bears the Phosphoserine; by PKB/AKT1 mark. Residues S267, S268, and S273 each carry the phosphoserine modification. Over residues 330 to 342 (TQPPPPPYQPPQP) the composition is skewed to pro residues. Positions 343–354 (QQQQQQGQQPSP) are enriched in low complexity.

As to quaternary structure, interacts with melt.

The protein resides in the cytoplasm. Its subcellular location is the nucleus. Functionally, transcription factor involved in the regulation of the insulin signaling pathway. Consistently activates both the downstream target Thor\d4EBP and the feedback control target InR. Involved in negative regulation of the cell cycle, modulating cell growth and proliferation. In response to cellular stresses, such as nutrient deprivation or increased levels of reactive oxygen species, foxo is activated and inhibits growth through the action of target genes such as Thor. Foxo activated in the adult fat body can regulate lifespan in adults; an insulin peptide itself may function as one secondary messenger of insulin-regulated aging. Also regulates Lip4, homolog of human acid lipases, thereby acting as a key modulator of lipid metabolism by insulin signaling and integrates insulin responses to glucose and lipid homeostasis. The chain is Forkhead box protein O from Drosophila ananassae (Fruit fly).